The primary structure comprises 211 residues: MGLIDISVKPQTEQCSEVLRTAGRLGYTAVAIPPESADECMSLEGDGIPRLYRRGYVEASTRRDVRRAAEKLAGVVDFIVVKPLTLEAARYAAANKRVHIIRVDGSNLWAADRGTAEIMAQRGWGALEVSLRNLTLNPGSPAAWRALAVVLRRSFAYGVHVFLASDAEEPHELWSPYSGASLAALLGVPWSHAMLYNSEERLRILLDASRA.

This sequence belongs to the eukaryotic/archaeal RNase P protein component 3 family. In terms of assembly, consists of a catalytic RNA component and at least 4-5 protein subunits.

Its subcellular location is the cytoplasm. The enzyme catalyses Endonucleolytic cleavage of RNA, removing 5'-extranucleotides from tRNA precursor.. Its function is as follows. Part of ribonuclease P, a protein complex that generates mature tRNA molecules by cleaving their 5'-ends. The sequence is that of Ribonuclease P protein component 3 from Aeropyrum pernix (strain ATCC 700893 / DSM 11879 / JCM 9820 / NBRC 100138 / K1).